The following is a 382-amino-acid chain: Lipid-A-disaccharide synthase (382 aa).

The protein belongs to the LpxB family.

It catalyses the reaction a lipid X + a UDP-2-N,3-O-bis[(3R)-3-hydroxyacyl]-alpha-D-glucosamine = a lipid A disaccharide + UDP + H(+). It participates in bacterial outer membrane biogenesis; LPS lipid A biosynthesis. Its function is as follows. Condensation of UDP-2,3-diacylglucosamine and 2,3-diacylglucosamine-1-phosphate to form lipid A disaccharide, a precursor of lipid A, a phosphorylated glycolipid that anchors the lipopolysaccharide to the outer membrane of the cell. The chain is Lipid-A-disaccharide synthase from Alkalilimnicola ehrlichii (strain ATCC BAA-1101 / DSM 17681 / MLHE-1).